The primary structure comprises 720 residues: MAEKFESLMNIHGFDLGSRYMDLKPLGCGGNGLVFSAVDNDCDKRVAIKKIVLTDPQSVKHALREIKIIRRLDHDNIVKVFEILGPSGSQLTDDVGSLTELNSVYIVQEYMETDLANVLEQGPLLEEHARLFMYQLLRGLKYIHSANVLHRDLKPANLFINTEDLVLKIGDFGLARIMDPHYSHKGHLSEGLVTKWYRSPRLLLSPNNYTKAIDMWAAGCIFAEMLTGKTLFAGAHELEQMQLILDSIPVVHEEDRQELLSVIPVYIRNDMTEPHRPLTQLLPGISREALDFLEQILTFSPMDRLTAEEALSHPYMSIYSFPTDEPISSHPFHIEDEVDDILLMDETHSHIYNWERYHDCQFSEHDWPIHNNFDIDEVQLDPRALSDVTDEEEVQVDPRKYLDGDREKYLEDPAFDTSYSAEPCWQYPDHHENKYCDLECSHTCNYKTRSSPYLDNLVWRESEVNHYYEPKLIIDLSNWKEQSKEKSDKRGKSKCERNGLVKAQIALEEASQQLAERERGQGFDFDSFIAGTIQLSAQHQSADVVDKLNDLNSSVSQLELKSLISKSVSREKQEKGRANLAQLGALYQSSWDSQFVSGGEECFLISQFCCEVRKDEHAEKENTYTSYLDKFFSRKEDSEMLETEPVEEGKRGERGREAGLLSGGGEFLLSKQLESIGTPQFHSPVGSPLKSIQATLTPSAMKSSPQIPHKTYSSILKHLN.

A Peptide (Met-Gly) (interchain with G-Cter in ubiquitin) cross-link involves residue Met1. The 297-residue stretch at 20-316 folds into the Protein kinase domain; the sequence is YMDLKPLGCG…AEEALSHPYM (297 aa). ATP-binding positions include 26-34 and Lys49; that span reads LGCGGNGLV. Asp152 functions as the Proton acceptor in the catalytic mechanism. The residue at position 189 (Ser189) is a Phosphoserine; by PAK1, PAK2 and PAK3. Positions 189-191 match the SEG motif motif; the sequence is SEG. The short motif at 332–337 is the FRIEDE motif element; that stretch reads FHIEDE. Ser386, Ser554, and Ser556 each carry phosphoserine. The interval 638 to 657 is disordered; that stretch reads SEMLETEPVEEGKRGERGRE. Residues 647–657 show a composition bias toward basic and acidic residues; that stretch reads EEGKRGERGRE. Position 683 is a phosphoserine (Ser683). The segment covering 700–714 has biased composition (polar residues); it reads AMKSSPQIPHKTYSS. The segment at 700 to 720 is disordered; the sequence is AMKSSPQIPHKTYSSILKHLN.

The protein belongs to the protein kinase superfamily. CMGC Ser/Thr protein kinase family. MAP kinase subfamily. As to quaternary structure, heterodimer with ERK4/MAPK4. Interacts with (via FRIEDE motif) MAPKAPK5. Interacts with UBE3A; this interaction may be indirect and mediated by HERC2, possibly via HERC2 interaction with NEURL4. The cofactor is Mg(2+). Phosphorylated at Ser-189 by PAK1, PAK2 and PAK3 resulting in catalytic activation. Phosphorylated by MAPKAPK5 at other sites. Post-translationally, ubiquitination at Met-1 leads to degradation by the proteasome pathway.

It localises to the cytoplasm. The protein resides in the nucleus. The enzyme catalyses L-seryl-[protein] + ATP = O-phospho-L-seryl-[protein] + ADP + H(+). The catalysed reaction is L-threonyl-[protein] + ATP = O-phospho-L-threonyl-[protein] + ADP + H(+). Its activity is regulated as follows. Activated by phosphorylation at Ser-189. In terms of biological role, atypical MAPK protein. Phosphorylates microtubule-associated protein 2 (MAP2) and MAPKAPK5. The precise role of the complex formed with MAPKAPK5 is still unclear, but the complex follows a complex set of phosphorylation events: upon interaction with atypical MAPKAPK5, ERK3/MAPK6 is phosphorylated at Ser-189 and then mediates phosphorylation and activation of MAPKAPK5, which in turn phosphorylates ERK3/MAPK6. May promote entry in the cell cycle. This chain is Mitogen-activated protein kinase 6 (Mapk6), found in Mus musculus (Mouse).